The sequence spans 432 residues: Trigger factor (432 aa).

In terms of domain architecture, PPIase FKBP-type spans 161–246; that stretch reads EDRVTIDFTG…LKKVEERELP (86 aa).

The protein belongs to the FKBP-type PPIase family. Tig subfamily. Homodimer and monomer. In vivo most of the ribosomes are in complex with monomeric TF. Uncomplexed TF, however, is in a monomer-dimer equilibrium with approximately two thirds of TF existing in a dimeric state.

Its subcellular location is the cytoplasm. The enzyme catalyses [protein]-peptidylproline (omega=180) = [protein]-peptidylproline (omega=0). Functionally, involved in protein export. Acts as a chaperone by maintaining the newly synthesized protein in an open conformation. Functions as a peptidyl-prolyl cis-trans isomerase. This Escherichia coli O127:H6 (strain E2348/69 / EPEC) protein is Trigger factor.